We begin with the raw amino-acid sequence, 1411 residues long: MSGHDSVTKISHILNEPVNEKVMVQNGFHESSKIADIELEIQERPSIKQWESPRSAVIPTSNHNFSPFLYTQFKSRGAAPFAPETIKSVDLVELPEGVPARVFHEKTGLFYQISPHSIPTFILAKKELPDPIKFYELVEDLGSVYGCVKLKIIPDADKFTQLNVDVDRLWFKARKQFFNSNEFQRTKIVDFYAKLYNFHNKIKKSTLTRIPSIDKRTLDLYRLRSCVKLRGGFNAVCEKKLWAQIGRELGYSGRIMSSLSTSLRSAYAKILLDFDIYEEEEQAARNNEKNEDMVESEIFRHSNSRSRDEEEPLHKKAKIHRDVFRAGSINHEFKRMRDIKHIKGFPTYFNSLTEFKLGYTQSTETTLPGYDFTFWENGMEIYDKSKYETKTSPVYNLRQYYEKSLAVFTAIVAKFGSSYPDLFAKHTTLPQKEFERLYFHLLSEHFIDFEIDTGLGLPCSMRSPGNNSSNEKFAIKNILDQWNLDNIPLNELSLLQHLDLDMANFTRTTYDIGMLFSCQGWSVSDHFLPSIDFNHLGSTKLVYSIAPKDMEKFEALIARGKSEWDTIQSRPRYSTSDDELKSFIETDFYKSFLDAEQSADYSNTGDNSKNSFPEDKIAGNTLHDGSQSDFIFEPNFILANGIKLYKTTQEQGSYIFKFPKAFTCSIGSGFYLSQNAKFAPSSWLRFSSEAAKWTSKMGFLPGLDVNQLLINALLNSNNPVLRKKCRDLISNYVVEEAENSKKLGELIGTVDVVYNKLNYISDISLESTGLSKIVVTHGALQRNLSLKEFVVLLEKPENGAHSICGIPIRDQSGNLNVCLHSYFDSASLGIALDGLDKPPTSYLLVHNEDFEKKWDVLMTSTFRNRTVPLNIIQYLISHTDSNTEFNRMLRSNFDDSLLLIEKCKKFIKTFVDVSCSVKDVDFGNGFNLRHLPLKFSDNMADNLESLYESVRKCSIEFSEKPTIIRLYHVSRQFPIDNRDIIDGNNLDLLKELYQKSLTIPLKVSYWTKLTRKICRLEWLSVYEHIFIERCDIKNEDPAKYSLPLLYSYFEFGLKYCDSEDIDKLGEVRKLILKYQDMMQKVRVFLKKDPPSKISLSDLEDVLLDIEEYRLPIQSSFFSELDYVIREIENAKKMNDVNILYNTDNIDKIDELIRKNDPKFVKFANQFNGSRLDKRPLASDNSGSVKAKQELKVFKLWNQHLDQIMQKNKFIEILPSIFRCLDLKSDKYIPLESCSKRQTKYCFCRRVEEGTAMVECEICKEWYHVDCISNGELVPPDDPNVLFVCSICTPPCMAVDNIEGVTFELDDLKRILVESLKLSLIPDPPILKNLFDVFAFALNFKNEMEKELFTNGYVNQLSSTHKIKYYLRKLKGSQCGFTNLTDPLRKHCQVKDAEAIKWLTDNGRIIITGIPN.

One can recognise a JmjN domain in the interval 118–159 (IPTFILAKKELPDPIKFYELVEDLGSVYGCVKLKIIPDADKF). The ARID domain maps to 185-279 (RTKIVDFYAK…ILLDFDIYEE (95 aa)). Residues 285–312 (RNNEKNEDMVESEIFRHSNSRSRDEEEP) form a disordered region. Positions 476–695 (KNILDQWNLD…FSSEAAKWTS (220 aa)) constitute a JmjC domain. The PHD-type zinc finger occupies 1238 to 1290 (TKYCFCRRVEEGTAMVECEICKEWYHVDCISNGELVPPDDPNVLFVCSICTPP).

It localises to the nucleus. May be involved in cell wall organization and biogenesis. The chain is Protein ECM5 (ECM5) from Saccharomyces cerevisiae (strain ATCC 204508 / S288c) (Baker's yeast).